We begin with the raw amino-acid sequence, 86 residues long: RNA-binding protein Hfq (86 aa).

The region spanning 9-68 is the Sm domain; sequence DPYLNTLRKEKVPVSIYLVNGIKLQGSIESFDQFVVLLKNTVSQMVYKHAISTVVPARPV. The disordered stretch occupies residues 66–86; the sequence is RPVRLPSPSDSEHGDSEPGNA. The segment covering 75-86 has biased composition (basic and acidic residues); sequence DSEHGDSEPGNA.

The protein belongs to the Hfq family. In terms of assembly, homohexamer.

Functionally, RNA chaperone that binds small regulatory RNA (sRNAs) and mRNAs to facilitate mRNA translational regulation in response to envelope stress, environmental stress and changes in metabolite concentrations. Also binds with high specificity to tRNAs. The sequence is that of RNA-binding protein Hfq from Pseudomonas putida (strain W619).